The primary structure comprises 424 residues: Gamma-glutamyl phosphate reductase (424 aa).

This sequence belongs to the gamma-glutamyl phosphate reductase family.

The protein resides in the cytoplasm. It catalyses the reaction L-glutamate 5-semialdehyde + phosphate + NADP(+) = L-glutamyl 5-phosphate + NADPH + H(+). The protein operates within amino-acid biosynthesis; L-proline biosynthesis; L-glutamate 5-semialdehyde from L-glutamate: step 2/2. In terms of biological role, catalyzes the NADPH-dependent reduction of L-glutamate 5-phosphate into L-glutamate 5-semialdehyde and phosphate. The product spontaneously undergoes cyclization to form 1-pyrroline-5-carboxylate. The chain is Gamma-glutamyl phosphate reductase from Shewanella sediminis (strain HAW-EB3).